Consider the following 443-residue polypeptide: MNKFRNFPPINTLINDENLANYPLYLRAHFAKIIVSNCKKELSKDENLNFSLQDLLKKITQSIDEFLNAQSQSLINATGVIIHTNLGRSIIDESIFERTKEIICSYSNLEFNMQSGKRGSRYDALSANLKILFDCEDCLVVNNNASAVFLILNTLAKNEEVITSRSELVEIGGNFRIPEVMLAAGVRLKEIGTTNKTHLYDYEKAINENTKMILKTHRSNFAFKGFFEEVSLSEIHTLTKKKKIISYYDLGSGWCEKINKQLSKNEPSVKELLKHCDILSFSGDKLFGSTQAGIILGKKKYIQQLKKNQLLRMLRVDKITLAFLNETTKAYLEKEYEKIPTLKLLNDNLKTIEKKALFIKEKIPIKCELKASKSLVGGGSMPDKSLDTFVLSFDEKALLLQEKFRKKGVIGRVENGHFVLDFRSILEKDLNRLIHAIKEVFHA.

The residue at position 285 (Lys-285) is an N6-(pyridoxal phosphate)lysine.

It belongs to the SelA family. Pyridoxal 5'-phosphate is required as a cofactor.

Its subcellular location is the cytoplasm. The catalysed reaction is L-seryl-tRNA(Sec) + selenophosphate + H(+) = L-selenocysteinyl-tRNA(Sec) + phosphate. It participates in aminoacyl-tRNA biosynthesis; selenocysteinyl-tRNA(Sec) biosynthesis; selenocysteinyl-tRNA(Sec) from L-seryl-tRNA(Sec) (bacterial route): step 1/1. Functionally, converts seryl-tRNA(Sec) to selenocysteinyl-tRNA(Sec) required for selenoprotein biosynthesis. The chain is L-seryl-tRNA(Sec) selenium transferase from Campylobacter lari (strain RM2100 / D67 / ATCC BAA-1060).